Reading from the N-terminus, the 159-residue chain is 2-C-methyl-D-erythritol 2,4-cyclodiphosphate synthase (159 aa).

2 residues coordinate a divalent metal cation: Asp-10 and His-12. 4-CDP-2-C-methyl-D-erythritol 2-phosphate contacts are provided by residues 10 to 12 (DVH) and 36 to 37 (HS). His-44 is a binding site for a divalent metal cation. 4-CDP-2-C-methyl-D-erythritol 2-phosphate is bound by residues 58–60 (DIG), 134–137 (TTTE), Phe-141, and Arg-144.

Belongs to the IspF family. As to quaternary structure, homotrimer. A divalent metal cation is required as a cofactor.

It carries out the reaction 4-CDP-2-C-methyl-D-erythritol 2-phosphate = 2-C-methyl-D-erythritol 2,4-cyclic diphosphate + CMP. The protein operates within isoprenoid biosynthesis; isopentenyl diphosphate biosynthesis via DXP pathway; isopentenyl diphosphate from 1-deoxy-D-xylulose 5-phosphate: step 4/6. Involved in the biosynthesis of isopentenyl diphosphate (IPP) and dimethylallyl diphosphate (DMAPP), two major building blocks of isoprenoid compounds. Catalyzes the conversion of 4-diphosphocytidyl-2-C-methyl-D-erythritol 2-phosphate (CDP-ME2P) to 2-C-methyl-D-erythritol 2,4-cyclodiphosphate (ME-CPP) with a corresponding release of cytidine 5-monophosphate (CMP). The sequence is that of 2-C-methyl-D-erythritol 2,4-cyclodiphosphate synthase from Bacteroides fragilis (strain YCH46).